Consider the following 568-residue polypeptide: Protein disconnected (568 aa).

The interval 16 to 77 is disordered; it reads GHGPHSHQHV…PRRWGSPPIN (62 aa). Basic residues predominate over residues 19–29; the sequence is PHSHQHVHSHL. The segment covering 30 to 45 has biased composition (low complexity); it reads PSHPQPNAASPASSPG. Over residues 46–62 the composition is skewed to gly residues; the sequence is GSSGSGSGSAAGSGTGS. 2 consecutive C2H2-type zinc fingers follow at residues 92–115 and 120–145; these read VQCS…SAVH and HKCT…ANPN. Disordered stretches follow at residues 134-157, 220-364, 391-419, and 501-568; these read RRSR…RRKI, LLST…SDAF, SSAS…DSDS, and QQYN…PISV. Over residues 235-246 the composition is skewed to acidic residues; the sequence is NEQDADPEDDND. Residues 253–263 show a composition bias toward polar residues; the sequence is QANSSSPAASS. A compositionally biased stretch (low complexity) spans 282 to 292; it reads SLSLASSSSIA. Residues 313–360 show a composition bias toward basic and acidic residues; sequence SEQDREQEQEQEQEREREAEKEQEQDVESDKEHEPEQEHELEREKRSP. Positions 391–402 are enriched in low complexity; it reads SSASSSSASASA. Residues 520-550 show a composition bias toward basic residues; that stretch reads HLTLSHHHQEQHHHLGHHHMGHHHHHHHQHH. A compositionally biased stretch (polar residues) spans 558–568; the sequence is SPAATNAPISV.

As to expression, expressed at low levels in the adult head and very low, but detectable, levels in the body.

It localises to the nucleus. Required for the establishment of stable connections between the larval optic nerves, the Bolwig's nerves, and their target cells in the brain during embryonic development. This Drosophila melanogaster (Fruit fly) protein is Protein disconnected (disco).